The following is a 58-amino-acid chain: uncharacterized protein (58 aa).

A helical membrane pass occupies residues 12–32; it reads VALVYISVYFFSCISLIVYFF.

It localises to the membrane. This is an uncharacterized protein from Saccharomyces cerevisiae (strain ATCC 204508 / S288c) (Baker's yeast).